The chain runs to 254 residues: tRNA (guanine-N(7)-)-methyltransferase (254 aa).

The disordered stretch occupies residues 1-34 (MNTNTPAHPPEGAPLSEATQAALASAEHAPDSPG). Residues Glu-87, Glu-112, Asp-139, and Asp-162 each contribute to the S-adenosyl-L-methionine site. Residue Asp-162 is part of the active site. Residues Lys-166, Asp-198, and 233-236 (TKFE) contribute to the substrate site.

Belongs to the class I-like SAM-binding methyltransferase superfamily. TrmB family.

The catalysed reaction is guanosine(46) in tRNA + S-adenosyl-L-methionine = N(7)-methylguanosine(46) in tRNA + S-adenosyl-L-homocysteine. The protein operates within tRNA modification; N(7)-methylguanine-tRNA biosynthesis. In terms of biological role, catalyzes the formation of N(7)-methylguanine at position 46 (m7G46) in tRNA. In Bordetella bronchiseptica (strain ATCC BAA-588 / NCTC 13252 / RB50) (Alcaligenes bronchisepticus), this protein is tRNA (guanine-N(7)-)-methyltransferase.